The following is a 444-amino-acid chain: MTLDLSTPATAGYLSGFANEFATEALPGALPHGRNSPQRAPYGLYAEQLSGTAFTAPRGHNRRSWLYRIRPAAVHRPFEPVTGPQRLVSEFGDSADVPPTPPNQLRWDPLPMPVEPTDFVEGLVTMAGNGSAAAMNGCAIHLYAANRSMQDRFFYSADGELLIVPQQGRLFIATEFGRLDVEPFEIAVIPRGVRFSVALPDGDARGYICENFGALLRLPDLGPIGSNGLANPRDFLTPQAAYEDREGAFELVAKLNGRLWRADIGHSPFDVVAWHGNYAPYKYDLRLFNTIGSISFDHPDPSIFLVLQSQSDTPGVDAIDFVIFPPRWLAAEDTFRPPWFHRNVASEFMGLVHGAYDAKAEGFVPGGASLHNCMSGHGPDADTFEKASASDTTKPHKVDATMAFMFETRTLIRPTRYALDTAQLQADYFECWQGIRKHFNPEQQ.

His298 (proton acceptor) is an active-site residue. Fe cation contacts are provided by His341 and Glu347. Residues Tyr356 and His377 each contribute to the homogentisate site. His377 contributes to the Fe cation binding site.

The protein belongs to the homogentisate dioxygenase family. As to quaternary structure, hexamer; dimer of trimers. Fe cation serves as cofactor.

It catalyses the reaction homogentisate + O2 = 4-maleylacetoacetate + H(+). It participates in amino-acid degradation; L-phenylalanine degradation; acetoacetate and fumarate from L-phenylalanine: step 4/6. In terms of biological role, involved in the catabolism of homogentisate (2,5-dihydroxyphenylacetate or 2,5-OH-PhAc), a central intermediate in the degradation of phenylalanine and tyrosine. Catalyzes the oxidative ring cleavage of the aromatic ring of homogentisate to yield maleylacetoacetate. The protein is Homogentisate 1,2-dioxygenase of Burkholderia ambifaria (strain MC40-6).